Here is a 447-residue protein sequence, read N- to C-terminus: Probable tRNA methyltransferase 9B (447 aa).

Phosphoserine is present on serine 212. Disordered stretches follow at residues 274 to 306 (AWAN…PNLD) and 320 to 348 (WLRT…NFLD). Positions 276 to 286 (ANSTVSQQPSR) are enriched in polar residues.

The protein belongs to the methyltransferase superfamily.

Its function is as follows. May modify wobble uridines in specific arginine and glutamic acid tRNAs. Acts as a tumor suppressor by promoting the expression of LIN9. This is Probable tRNA methyltransferase 9B (Trmt9b) from Mus musculus (Mouse).